We begin with the raw amino-acid sequence, 629 residues long: DNA mismatch repair protein MutL (629 aa).

It belongs to the DNA mismatch repair MutL/HexB family.

Functionally, this protein is involved in the repair of mismatches in DNA. It is required for dam-dependent methyl-directed DNA mismatch repair. May act as a 'molecular matchmaker', a protein that promotes the formation of a stable complex between two or more DNA-binding proteins in an ATP-dependent manner without itself being part of a final effector complex. The chain is DNA mismatch repair protein MutL from Rhodospirillum rubrum (strain ATCC 11170 / ATH 1.1.1 / DSM 467 / LMG 4362 / NCIMB 8255 / S1).